The following is a 257-amino-acid chain: Ribonuclease HII (257 aa).

Positions 72–257 (TYIAGIDEVG…FAPIKDMIKK (186 aa)) constitute an RNase H type-2 domain. A divalent metal cation is bound by residues Asp78, Glu79, and Asp170.

This sequence belongs to the RNase HII family. Requires Mn(2+) as cofactor. Mg(2+) is required as a cofactor.

The protein localises to the cytoplasm. The catalysed reaction is Endonucleolytic cleavage to 5'-phosphomonoester.. Functionally, endonuclease that specifically degrades the RNA of RNA-DNA hybrids. The polypeptide is Ribonuclease HII (Bacillus anthracis (strain A0248)).